The sequence spans 73 residues: Conotoxin CnIIIE (73 aa).

A signal peptide spans 1–19 (MSKLGVLLTICLLLFPLTA). A propeptide spanning residues 20 to 49 (LPMDGDQSVDRPAERMQDDISSEQYPLFNQ) is cleaved from the precursor. Intrachain disulfides connect C53–C72, C54–C70, and C60–C73.

Belongs to the conotoxin M superfamily. Expressed by the venom duct.

It is found in the secreted. Functionally, shows a paralytic effect in fish. The chain is Conotoxin CnIIIE from Conus consors (Singed cone).